Here is an 834-residue protein sequence, read N- to C-terminus: Glycerol-3-phosphate acyltransferase (834 aa).

An HXXXXD motif motif is present at residues 304 to 309; the sequence is CHRSHM. The segment at 800–834 is disordered; sequence SVSMPAETSNQPEAPETPETPETPETPEPEGKTES.

It belongs to the GPAT/DAPAT family.

The protein localises to the cell inner membrane. The catalysed reaction is sn-glycerol 3-phosphate + an acyl-CoA = a 1-acyl-sn-glycero-3-phosphate + CoA. Its pathway is phospholipid metabolism; CDP-diacylglycerol biosynthesis; CDP-diacylglycerol from sn-glycerol 3-phosphate: step 1/3. The protein is Glycerol-3-phosphate acyltransferase of Yersinia pseudotuberculosis serotype I (strain IP32953).